A 149-amino-acid polypeptide reads, in one-letter code: Transcriptional repressor NrdR (149 aa).

A zinc finger spans residues 3–34; that stretch reads CPFCSATDTKVIDSRLVADGHQVRRRRECTLC. The ATP-cone domain maps to 49–139; sequence PRVIKRDDTR…VYRAFEDVSQ (91 aa).

Belongs to the NrdR family. The cofactor is Zn(2+).

Negatively regulates transcription of bacterial ribonucleotide reductase nrd genes and operons by binding to NrdR-boxes. The protein is Transcriptional repressor NrdR of Shewanella denitrificans (strain OS217 / ATCC BAA-1090 / DSM 15013).